Here is a 213-residue protein sequence, read N- to C-terminus: MTSLRYWDISPALDPSTPTWPGDTPFQQEWAARLDEQCPVNVGRITLSPHTGAHVDGPLHYRADGLPIGQVPLDIYMGPCRVIHCIGANPLVTPEHLAGQLDDLPSRVLLRTFERVPANWPEGFCAIAPATIECLAERGVRLVGIDTPSLDPQHSKTLDAHHAVGRHGMAILEGVVLDDVPAGDYELLALPLKFTHLDASPVRAVLRALPTAE.

Residue W20 coordinates substrate. Residues H50, H54, and D56 each coordinate Zn(2+). H60 acts as the Proton donor/acceptor in catalysis. Positions 161 and 173 each coordinate Zn(2+).

This sequence belongs to the Cyclase 1 superfamily. KynB family. Homodimer. Zn(2+) is required as a cofactor.

The enzyme catalyses N-formyl-L-kynurenine + H2O = L-kynurenine + formate + H(+). Its pathway is amino-acid degradation; L-tryptophan degradation via kynurenine pathway; L-kynurenine from L-tryptophan: step 2/2. Its function is as follows. Catalyzes the hydrolysis of N-formyl-L-kynurenine to L-kynurenine, the second step in the kynurenine pathway of tryptophan degradation. The protein is Kynurenine formamidase of Pseudomonas aeruginosa (strain UCBPP-PA14).